Consider the following 270-residue polypeptide: Formamidopyrimidine-DNA glycosylase (270 aa).

P2 (schiff-base intermediate with DNA) is an active-site residue. Residue E3 is the Proton donor of the active site. The active-site Proton donor; for beta-elimination activity is K58. The DNA site is built by H91, R109, and R151. The FPG-type zinc-finger motif lies at 236 to 270 (MVYNRQEEPCRLCGTPIRQIRQGQRSTYYCPLCQP). Residue R260 is the Proton donor; for delta-elimination activity of the active site.

Belongs to the FPG family. In terms of assembly, monomer. Zn(2+) serves as cofactor.

It catalyses the reaction Hydrolysis of DNA containing ring-opened 7-methylguanine residues, releasing 2,6-diamino-4-hydroxy-5-(N-methyl)formamidopyrimidine.. It carries out the reaction 2'-deoxyribonucleotide-(2'-deoxyribose 5'-phosphate)-2'-deoxyribonucleotide-DNA = a 3'-end 2'-deoxyribonucleotide-(2,3-dehydro-2,3-deoxyribose 5'-phosphate)-DNA + a 5'-end 5'-phospho-2'-deoxyribonucleoside-DNA + H(+). Involved in base excision repair of DNA damaged by oxidation or by mutagenic agents. Acts as a DNA glycosylase that recognizes and removes damaged bases. Has a preference for oxidized purines, such as 7,8-dihydro-8-oxoguanine (8-oxoG). Has AP (apurinic/apyrimidinic) lyase activity and introduces nicks in the DNA strand. Cleaves the DNA backbone by beta-delta elimination to generate a single-strand break at the site of the removed base with both 3'- and 5'-phosphates. This chain is Formamidopyrimidine-DNA glycosylase, found in Chromobacterium violaceum (strain ATCC 12472 / DSM 30191 / JCM 1249 / CCUG 213 / NBRC 12614 / NCIMB 9131 / NCTC 9757 / MK).